The sequence spans 272 residues: Regulatory factor X-associated protein (272 aa).

Disordered regions lie at residues 1–20 (MEAQGVAEGAGPGAASGVPH), 74–142 (LCEG…KTCT), and 175–195 (KKKKSDQALNCGGTASTGSAG). Residues 79-94 (GDGEEEAGEDEADLLD) are compositionally biased toward acidic residues. Positions 163 to 178 (KKHRNKMYKDKYKKKK) match the Nuclear localization signal motif. K198 is covalently cross-linked (Glycyl lysine isopeptide (Lys-Gly) (interchain with G-Cter in SUMO2)). A C-terminal domain region spans residues 214 to 270 (TGSFGDRPARPTLLEQVLNQKRLSLLRSPEVVQFLQKQQQLLNQQVLEQRQQQFPGT).

The RFX heterotetrameric complex consists of 2 molecules of RFX5 and one each of RFXAP and RFX-B/RFXANK; with each subunit representing a separate complementation group. RFX forms cooperative DNA binding complexes with X2BP and CBF/NF-Y. RFX associates with CIITA to form an active transcriptional complex. Post-translationally, phosphorylated. In terms of tissue distribution, ubiquitous.

Its subcellular location is the nucleus. Its function is as follows. Part of the RFX complex that binds to the X-box of MHC II promoters. This Homo sapiens (Human) protein is Regulatory factor X-associated protein (RFXAP).